The primary structure comprises 116 residues: Protein Wnt-5a (116 aa).

S1 carries O-palmitoleoyl serine; by PORCN lipidation. Residues N69 and N83 are each glycosylated (N-linked (GlcNAc...) asparagine). C82 and C97 form a disulfide bridge.

The protein belongs to the Wnt family. Palmitoleoylation is required for efficient binding to frizzled receptors. Depalmitoleoylation leads to Wnt signaling pathway inhibition.

It localises to the secreted. Its subcellular location is the extracellular space. The protein resides in the extracellular matrix. In terms of biological role, ligand for members of the frizzled family of seven transmembrane receptors. Can activate or inhibit canonical Wnt signaling, depending on receptor context. Required during embryogenesis for extension of the primary anterior-posterior axis. The protein is Protein Wnt-5a (WNT-5A) of Alopias vulpinus (Common thresher shark).